The primary structure comprises 171 residues: MDAVSWAPGRPSHPDTPPNIYEGGLGAQQQQGPSAQGSKPKNFRLRHLRSLALYLPGHMQPAGQCGSHWLGRLMAGGSLTRPEGSPWPLDLPQGTLGPGNSHCSALLEAHLPRDSLGNTASSSSMDPAKGVPSQSGPPEGLGLRPKRSWRALEETMCPLCKRTRSGALERT.

Disordered stretches follow at residues 1-41 (MDAV…SKPK) and 114-147 (DSLG…RPKR). The span at 27 to 38 (AQQQQGPSAQGS) shows a compositional bias: low complexity. Residues 116–125 (LGNTASSSSM) are compositionally biased toward polar residues.

This is an uncharacterized protein from Mus musculus (Mouse).